A 1534-amino-acid polypeptide reads, in one-letter code: MAERANLVFHNKEIDGTAIKRLISRLIDHFGMGYTSHILDQIKTLGFHQATTTSISLGIEDLLTIPSKGWLVQDAEQQSFLLEKHYYYGAVHAVEKLRQSVEIWYATSEYLKQEMNSNFRITDPSNPVYLMSFSGARGNASQVHQLVGMRGLMADPQGQMIDLPIQSNLREGLSLTEYIISCYGARKGVVDTAVRTADAGYLTRRLVEVVQHIIVRRRDCGTIQGISVSPQNGMTEKLFVQTLIGRVLADDIYIGSRCIASRNQDIGIGLVNRFITAFRAQPFRAQPIYIRTPFTCRSTSWICQLCYGRSPTHGDLVELGEAVGIIAGQSIGEPGTQLTLRTFHTGGVFTGGTADLIRSPSNGKIQFNEDLVHPTRTRHGQPAFLCYIDLHVTIQSQDILHSVNIPLKSLILVQNDQYVESEQVIAEIRAGMSTLHFKEKVQKHIYSESDGEMHWSTDVYHAPEYQYGNLRRLPKTSHLWILSVSMCRSSIASFSLHKDQDQMNTYSFSVDGRYIFDFSMANDQVSHRLLDTFGKKDREILDYLTPDRIVSNGHWNCFYPSILQDNSDLLAKKRRNRFVVPLQYHQEQEKERISCLGISMEIPFMGVLRRNTIFAYFDDPRYRKDKRGSGIVKFRYRTLEEEYRTQEEEYRTREEEYRTREEEYRTREEDSEDEYESPENKYRTREGEGEYEILEDEYRTLEDEYETLEDEYGILEDEYRTLEKDSEEEYGSLENKYRTREGEGEYEILEEDSEEEYGSSEDGSEKEYGTLEEDSEEDSEEDSEDEYGSPEENSILKKEGFIEHRGTKEFSLKYQKEVDRFFFILQELHILPRSSSLKVLDNSIIGVDTQLTKNTRSRLGGLVRVKRKKSHTELKIFSGDIHFPEEADKILGGSLIPPEREKKDSKESKKRKNWVYVQRKKILKSKEKYFVLVRPAVAYEMDEGRNLATLFPQDLLQEEDNLQLRLVNFISHENSKLTQRIYHTNSQFVRTCLVVNWEQEEKEGARASLVEVRTNDLIRDFLRIELVKSTISYTRRRYDRTSVGLIPNNRLDRNNTNSFYSKAKIQSLSQHQEVIGTLLNRNKEYPSLMILLASNCSRIGLFKNSKYPNAVKESNPRIPIRDIFGLLGVIVPSISNFSSSYYLLTHNQILLKKYLFLDNLKQTFQVLQGLKYSLIDENKRISNFDSNIMLEPFHLNWHFLHHDSWEETLAIIHLGQFICENLCLFKSHIKKSGQIFIVNMDSFVLRAAKPYLATIGATVHGHYGKILYKGDRLVTFIYEKSRSSDITQGLPKVEQIFEARSIDSLSPNLERRIEDWNERIPRILGVPWGFLIGAELTIAQSRISLVNKIQKVYRSQGVQIHNRHIEIIIRQVTSKVRVSEDGMSNVFLPGELIGLLRAERAGRALDESIYYRAILLGITRASLNTQSFISEASFQETARVLAKAALRGRIDWLKGLKENVVLGGIIPVGTGFQKFVHRSPQDKNLYFEIQKKNLFASEMRDILFLHTELVSSDSDVTNNFYETSETPFTPIYTI.

The Zn(2+) site is built by cysteine 220, cysteine 296, cysteine 303, and cysteine 306. Basic and acidic residues-rich tracts occupy residues 644-668 (RTQE…RTRE) and 678-688 (PENKYRTREGE). 2 disordered regions span residues 644–698 (RTQE…EDEY) and 719–800 (YRTL…KKEG). Acidic residues-rich tracts occupy residues 744–762 (GEYE…SSED) and 770–789 (TLEE…EYGS).

This sequence belongs to the RNA polymerase beta' chain family. RpoC2 subfamily. As to quaternary structure, in plastids the minimal PEP RNA polymerase catalytic core is composed of four subunits: alpha, beta, beta', and beta''. When a (nuclear-encoded) sigma factor is associated with the core the holoenzyme is formed, which can initiate transcription. It depends on Zn(2+) as a cofactor.

The protein localises to the plastid. It localises to the chloroplast. The catalysed reaction is RNA(n) + a ribonucleoside 5'-triphosphate = RNA(n+1) + diphosphate. In terms of biological role, DNA-dependent RNA polymerase catalyzes the transcription of DNA into RNA using the four ribonucleoside triphosphates as substrates. The polypeptide is DNA-directed RNA polymerase subunit beta'' (Saccharum hybrid (Sugarcane)).